A 129-amino-acid chain; its full sequence is Small ribosomal subunit protein uS11 (129 aa).

It belongs to the universal ribosomal protein uS11 family. As to quaternary structure, part of the 30S ribosomal subunit. Interacts with proteins S7 and S18. Binds to IF-3.

Its function is as follows. Located on the platform of the 30S subunit, it bridges several disparate RNA helices of the 16S rRNA. Forms part of the Shine-Dalgarno cleft in the 70S ribosome. In Chelativorans sp. (strain BNC1), this protein is Small ribosomal subunit protein uS11.